The primary structure comprises 325 residues: Isoaspartyl peptidase/L-asparaginase (325 aa).

The active-site Nucleophile is the T193. Residues R221–D224 and T243–G246 contribute to the substrate site.

This sequence belongs to the Ntn-hydrolase family. Heterotetramer of two alpha and two beta chains arranged as a dimer of alpha/beta heterodimers. Cleaved into an alpha and beta chain by autocatalysis; this activates the enzyme. The N-terminal residue of the beta subunit is responsible for the nucleophile hydrolase activity. In terms of tissue distribution, expressed in ripening seeds and developing nodules.

It catalyses the reaction Cleavage of a beta-linked Asp residue from the N-terminus of a polypeptide.. Its function is as follows. Degrades proteins damaged by L-isoaspartyl residue formation (also known as beta-Asp residues). Also has L-asparaginase activity, which is used to liberate stored nitrogen during seed development. The protein is Isoaspartyl peptidase/L-asparaginase of Lupinus luteus (European yellow lupine).